The sequence spans 297 residues: Ribosomal RNA small subunit methyltransferase H (297 aa).

Residues 35–37 (GGH), D55, F82, D100, and Q107 each bind S-adenosyl-L-methionine.

Belongs to the methyltransferase superfamily. RsmH family.

The protein localises to the cytoplasm. The enzyme catalyses cytidine(1402) in 16S rRNA + S-adenosyl-L-methionine = N(4)-methylcytidine(1402) in 16S rRNA + S-adenosyl-L-homocysteine + H(+). Specifically methylates the N4 position of cytidine in position 1402 (C1402) of 16S rRNA. This Chlamydia caviae (strain ATCC VR-813 / DSM 19441 / 03DC25 / GPIC) (Chlamydophila caviae) protein is Ribosomal RNA small subunit methyltransferase H.